The primary structure comprises 405 residues: Probable tRNA sulfurtransferase (405 aa).

The THUMP domain maps to 60–165 (DKIDQRLKLV…QDAIYISNQL (106 aa)). ATP is bound by residues 183–184 (ML), 208–209 (HF), arginine 265, glycine 287, and glutamine 296.

The protein belongs to the ThiI family.

Its subcellular location is the cytoplasm. It carries out the reaction [ThiI sulfur-carrier protein]-S-sulfanyl-L-cysteine + a uridine in tRNA + 2 reduced [2Fe-2S]-[ferredoxin] + ATP + H(+) = [ThiI sulfur-carrier protein]-L-cysteine + a 4-thiouridine in tRNA + 2 oxidized [2Fe-2S]-[ferredoxin] + AMP + diphosphate. The catalysed reaction is [ThiS sulfur-carrier protein]-C-terminal Gly-Gly-AMP + S-sulfanyl-L-cysteinyl-[cysteine desulfurase] + AH2 = [ThiS sulfur-carrier protein]-C-terminal-Gly-aminoethanethioate + L-cysteinyl-[cysteine desulfurase] + A + AMP + 2 H(+). It participates in cofactor biosynthesis; thiamine diphosphate biosynthesis. Its function is as follows. Catalyzes the ATP-dependent transfer of a sulfur to tRNA to produce 4-thiouridine in position 8 of tRNAs, which functions as a near-UV photosensor. Also catalyzes the transfer of sulfur to the sulfur carrier protein ThiS, forming ThiS-thiocarboxylate. This is a step in the synthesis of thiazole, in the thiamine biosynthesis pathway. The sulfur is donated as persulfide by IscS. The chain is Probable tRNA sulfurtransferase from Lactobacillus gasseri (strain ATCC 33323 / DSM 20243 / BCRC 14619 / CIP 102991 / JCM 1131 / KCTC 3163 / NCIMB 11718 / NCTC 13722 / AM63).